Reading from the N-terminus, the 1269-residue chain is Clustered mitochondria protein homolog (1269 aa).

Residues 297-552 (PSNNGDFMRT…NTNPVDIEFV (256 aa)) form the Clu domain. A compositionally biased stretch (basic and acidic residues) spans 958–969 (EKKKEESKKAAA). The tract at residues 958–989 (EKKKEESKKAAADGEDAGSSGATSKEEEQAKE) is disordered. TPR repeat units follow at residues 1020–1053 (VSSY…SERC) and 1147–1180 (GQNE…FSKE). Residues 1211–1269 (LASAQQATKPANISQKKGKKSSSSSPALTNKSVDELLQFIEGPGASKSSKKSKKKHTKN) form a disordered region. Over residues 1213 to 1223 (SAQQATKPANI) the composition is skewed to polar residues. Residues 1258–1269 (SSKKSKKKHTKN) show a composition bias toward basic residues.

It belongs to the CLU family. In terms of assembly, may associate with the eukaryotic translation initiation factor 3 (eIF-3) complex.

Its subcellular location is the cytoplasm. Its function is as follows. mRNA-binding protein involved in proper cytoplasmic distribution of mitochondria. The sequence is that of Clustered mitochondria protein homolog from Kluyveromyces lactis (strain ATCC 8585 / CBS 2359 / DSM 70799 / NBRC 1267 / NRRL Y-1140 / WM37) (Yeast).